We begin with the raw amino-acid sequence, 390 residues long: Two-component response regulator ORR29 (390 aa).

Positions 13–130 constitute a Response regulatory domain; the sequence is SAMVIDEDKC…TIKNLWQYVD (118 aa). 4-aspartylphosphate is present on aspartate 65. The segment at residues 169–226 is a DNA-binding region (myb-like GARP); that stretch reads KKYYLMWTPHLQKKFLHALQILGKDASPKNIKKIMGVDNIDCRQIAAHLQKHRLRLTK. Disordered stretches follow at residues 233–271 and 303–339; these read FTTDTSKDESNSRIGPAESHHVCRNASTLQPRSNTQPTE and SKHSSDPSGDEDEQVVVGGDQDGCANEANDIDSSGDH. The segment covering 257–271 has biased composition (polar residues); the sequence is NASTLQPRSNTQPTE.

Belongs to the ARR family. Type-B subfamily. Post-translationally, two-component system major event consists of a His-to-Asp phosphorelay between a sensor histidine kinase (HK) and a response regulator (RR). In plants, the His-to-Asp phosphorelay involves an additional intermediate named Histidine-containing phosphotransfer protein (HPt). This multistep phosphorelay consists of a His-Asp-His-Asp sequential transfer of a phosphate group between first a His and an Asp of the HK protein, followed by the transfer to a conserved His of the HPt protein and finally the transfer to an Asp in the receiver domain of the RR protein.

It localises to the nucleus. In terms of biological role, transcriptional activator that binds specific DNA sequence. Functions as a response regulator involved in His-to-Asp phosphorelay signal transduction system. Phosphorylation of the Asp residue in the receiver domain activates the ability of the protein to promote the transcription of target genes. May directly activate some type-A response regulators in response to cytokinins. This chain is Two-component response regulator ORR29, found in Oryza sativa subsp. indica (Rice).